We begin with the raw amino-acid sequence, 220 residues long: Iron-sulfur cluster repair protein YtfE (220 aa).

Belongs to the RIC family. YtfE subfamily. As to quaternary structure, homodimer.

The protein localises to the cytoplasm. Di-iron-containing protein involved in the repair of iron-sulfur clusters damaged by oxidative and nitrosative stress conditions. In Salmonella typhimurium (strain LT2 / SGSC1412 / ATCC 700720), this protein is Iron-sulfur cluster repair protein YtfE.